The primary structure comprises 684 residues: MQSREDVPRSRRLASPRGGRRPKRISKPSVSAFFTGPEELKDTAHSAALLAQLKSFYDARLLCDVTIEVVTPGSGPGTGRLFSCNRNVLAAACPYFKSMFTGGMYESQQASVTMHDVDAESFEVLVDYCYTGRVSLSEANVQRLYAASDMLQLEYVREACASFLARRLDLTNCTAILKFADAFDHHKLRSQAQSYIAHNFKQLSRMGSIREETLADLTLAQLLAVLRLDSLDIESERTVCHVAVQWLEAAAKERGPSAAEVFKCVRWMHFTEEDQDYLEGLLTKPIVKKYCLDVIEGALQMRYGDLLYKSLVPVPNSSSSSSSSNSLVSAAENPPQRLGMCAKEMVIFFGHPRDPFLCYDPYSGDIYTMPSPLTSFAHTKTVTSSAVCVSPDHDIYLAAQPRKDLWVYKPAQNSWQQLADRLLCREGMDVAYLNGYIYILGGRDPITGVKLKEVECYSVQRNQWALVAPVPHSFYSFELIVVQNYLYAVNSKRMLCYDPSHNMWLNCASLKRSDFQEACVFNDEIYCICDIPVMKVYNPARGEWRRISNIPLDSETHNYQIVNHDQKLLLITSTTPQWKKNRVTVYEYDTREDQWINIGTMLGLLQFDSGFICLCARVYPSCLEPGQSFITEEDDARSESSTEWDLDGFSELDSESGSSSSFSDDEVWVQVAPQRNAQDQQGSL.

The interval 1-27 (MQSREDVPRSRRLASPRGGRRPKRISK) is disordered. The span at 10-26 (SRRLASPRGGRRPKRIS) shows a compositional bias: basic residues. Serine 29 is modified (phosphoserine). Positions 63–138 (CDVTIEVVTP…CYTGRVSLSE (76 aa)) constitute a BTB domain. Kelch repeat units lie at residues 386–435 (AVCV…YLNG), 436–484 (YIYI…VVQN), 486–523 (LYAV…VFND), 524–564 (EIYC…IVNH), and 567–616 (KLLL…CLCA). The segment at 630–666 (ITEEDDARSESSTEWDLDGFSELDSESGSSSSFSDDE) is disordered. A compositionally biased stretch (acidic residues) spans 631–654 (TEEDDARSESSTEWDLDGFSELDS). The ATG8 interaction motif (AIM) motif lies at 668–671 (WVQV).

Core component of a BCR3 (BTB-CUL3-RBX1) E3 ubiquitin ligase complex, also named Cul3-RING ubiquitin ligase complex CUL3(KBTBD6/7), composed of CUL3, RBX1, KBTBD6 and KBTBD7. Interacts with GABARAP; the interaction is direct and is required for the ubiquitination of TIAM1. Interacts with GABARAPL1, GABARAPL2 and MAP1LC3B; the interaction is direct.

The protein localises to the cytoplasm. It is found in the nucleus. Its pathway is protein modification; protein ubiquitination. Its function is as follows. As part of the CUL3(KBTBD6/7) E3 ubiquitin ligase complex functions as a substrate adapter for the RAC1 guanine exchange factor (GEF) TIAM1, mediating its 'Lys-48' ubiquitination and proteasomal degradation. By controlling this ubiquitination, regulates RAC1 signal transduction and downstream biological processes including the organization of the cytoskeleton, cell migration and cell proliferation. Ubiquitination of TIAM1 requires the membrane-associated protein GABARAP which may restrict locally the activity of the complex. The protein is Kelch repeat and BTB domain-containing protein 7 of Homo sapiens (Human).